A 787-amino-acid polypeptide reads, in one-letter code: Pleckstrin homology domain-containing family G member 6 (787 aa).

In terms of domain architecture, DH spans 161–353 (HQQEALWELL…ESFLRHINGQ (193 aa)). One can recognise a PH domain in the interval 409–509 (QLLLEGPVRV…WLEKTQHAQT (101 aa)). The interval 533–762 (QGTESPSTRP…EPGNGKPRRL (230 aa)) is disordered. A compositionally biased stretch (low complexity) spans 535-557 (TESPSTRPSTPSPSPEDSQSSAE). Over residues 724-742 (LRPRSLREDMLREIREELA) the composition is skewed to basic and acidic residues.

Interacts with MYH10. Interacts with ELMO1 and EZR (in an open conformation). Interacts with CSPP1.

It is found in the cell projection. Its subcellular location is the microvillus. The protein resides in the cytoplasm. It localises to the cytoskeleton. The protein localises to the spindle. It is found in the cleavage furrow. Its function is as follows. Guanine nucleotide exchange factor activating the small GTPase RHOA, which, in turn, induces myosin filament formation. Also activates RHOG. Does not activate RAC1, or to a much lower extent than RHOA and RHOG. Part of a functional unit, involving PLEKHG6, MYH10 and RHOA, at the cleavage furrow to advance furrow ingression during cytokinesis. In epithelial cells, required for the formation of microvilli and membrane ruffles on the apical pole. Along with EZR, required for normal macropinocytosis. The polypeptide is Pleckstrin homology domain-containing family G member 6 (Plekhg6) (Mus musculus (Mouse)).